A 1463-amino-acid polypeptide reads, in one-letter code: Kinesin-like protein KIF15 (1463 aa).

The Kinesin motor domain maps to Ala18–Ile354. Position 99-106 (Gly99–Thr106) interacts with ATP. The tract at residues Ala387 to Ser424 is disordered. Positions Ser398–Val414 are enriched in polar residues. A compositionally biased stretch (low complexity) spans Ser415–Ser424. 2 coiled-coil regions span residues Ser436–Asn517 and Thr586–Lys646. 3 disordered regions span residues Ala686 to Ile720, Phe1335 to Thr1356, and Gln1409 to Ala1444. A compositionally biased stretch (polar residues) spans Asp701–Pro715. The span at Glu1418 to Gln1428 shows a compositional bias: basic and acidic residues.

This sequence belongs to the TRAFAC class myosin-kinesin ATPase superfamily. Kinesin family. KLP2 subfamily. Homodimer.

It is found in the cytoplasm. Its subcellular location is the cytoskeleton. The protein resides in the spindle. Functionally, plus-end directed kinesin-like motor enzyme involved in mitotic spindle assembly. Plays a role in positioning spindle poles during mitosis, specifically at prometaphase. The sequence is that of Kinesin-like protein KIF15 (KIF15) from Strongylocentrotus purpuratus (Purple sea urchin).